Reading from the N-terminus, the 243-residue chain is Carboxy-S-adenosyl-L-methionine synthase (243 aa).

S-adenosyl-L-methionine contacts are provided by residues Tyr40, 65 to 67, 90 to 91, 118 to 119, Asn133, and Arg200; these read GCS, DN, and DI.

It belongs to the class I-like SAM-binding methyltransferase superfamily. Cx-SAM synthase family. As to quaternary structure, homodimer.

It carries out the reaction prephenate + S-adenosyl-L-methionine = carboxy-S-adenosyl-L-methionine + 3-phenylpyruvate + H2O. Its function is as follows. Catalyzes the conversion of S-adenosyl-L-methionine (SAM) to carboxy-S-adenosyl-L-methionine (Cx-SAM). This is Carboxy-S-adenosyl-L-methionine synthase from Shewanella sp. (strain MR-7).